A 619-amino-acid polypeptide reads, in one-letter code: Chaperone protein HscA homolog (619 aa).

Belongs to the heat shock protein 70 family.

Functionally, chaperone involved in the maturation of iron-sulfur cluster-containing proteins. Has a low intrinsic ATPase activity which is markedly stimulated by HscB. In Shewanella denitrificans (strain OS217 / ATCC BAA-1090 / DSM 15013), this protein is Chaperone protein HscA homolog.